Here is a 483-residue protein sequence, read N- to C-terminus: Altronate oxidoreductase (483 aa).

I18–A29 provides a ligand contact to NAD(+).

The protein belongs to the mannitol dehydrogenase family. UxaB subfamily.

It carries out the reaction D-altronate + NAD(+) = keto-D-tagaturonate + NADH + H(+). Its pathway is carbohydrate metabolism; pentose and glucuronate interconversion. The polypeptide is Altronate oxidoreductase (Escherichia coli O1:K1 / APEC).